Here is a 132-residue protein sequence, read N- to C-terminus: MATPRSAKKAVRKSGSKSAKCGLIFPVGRVGGMMRRGQYARRIGASGAVYLAAVLEYLTAELLELSVKAAAQSGKKRCRLNPRTVMLAARHDDDIGTLLKNVTLSHSGVVPNISKAMAKKKGGKKGKATPSA.

Belongs to the histone H2A family. As to quaternary structure, the nucleosome is a histone octamer containing two molecules each of H2A, H2B, H3 and H4 assembled in one H3-H4 heterotetramer and two H2A-H2B heterodimers. The octamer wraps approximately 147 bp of DNA.

The protein resides in the nucleus. It is found in the chromosome. Functionally, core component of nucleosome. Nucleosomes wrap and compact DNA into chromatin, limiting DNA accessibility to the cellular machineries which require DNA as a template. Histones thereby play a central role in transcription regulation, DNA repair, DNA replication and chromosomal stability. DNA accessibility is regulated via a complex set of post-translational modifications of histones, also called histone code, and nucleosome remodeling. The sequence is that of Histone H2A.1 from Leishmania infantum.